A 409-amino-acid polypeptide reads, in one-letter code: Elongation factor Tu, chloroplastic (409 aa).

Residues 10–214 (KQHVNIGTIG…NVDTYIPTPV (205 aa)) enclose the tr-type G domain. A G1 region spans residues 19 to 26 (GHVDHGKT). 19-26 (GHVDHGKT) is a GTP binding site. Threonine 26 is a binding site for Mg(2+). Residues 60–64 (GITIN) form a G2 region. The segment at 81–84 (DCPG) is G3. Residues 81–85 (DCPGH) and 136–139 (NKED) contribute to the GTP site. Positions 136-139 (NKED) are G4. Residues 174–176 (SAL) form a G5 region.

This sequence belongs to the TRAFAC class translation factor GTPase superfamily. Classic translation factor GTPase family. EF-Tu/EF-1A subfamily.

It is found in the plastid. The protein localises to the chloroplast. The enzyme catalyses GTP + H2O = GDP + phosphate + H(+). GTP hydrolase that promotes the GTP-dependent binding of aminoacyl-tRNA to the A-site of ribosomes during protein biosynthesis. The sequence is that of Elongation factor Tu, chloroplastic (tufA) from Tupiella akineta (Green alga).